Consider the following 237-residue polypeptide: Thrombin-like enzyme agkihpin-2 (237 aa).

Residue M1 is a propeptide. The 227-residue stretch at 2–228 (ILGDDECNIN…HLDWIENIIA (227 aa)) folds into the Peptidase S1 domain. C27 and C43 are disulfide-bonded. Catalysis depends on H42, which acts as the Charge relay system. N-linked (GlcNAc...) asparagine glycosylation occurs at N80. Residue D87 is the Charge relay system of the active site. 3 disulfides stabilise this stretch: C119–C189, C151–C168, and C179–C204. S183 functions as the Charge relay system in the catalytic mechanism.

It belongs to the peptidase S1 family. Snake venom subfamily. In terms of tissue distribution, expressed by the venom gland (at protein level). Expressed by the venom gland.

Its subcellular location is the secreted. Its activity is regulated as follows. The hydrolysis of TAMe (tosyl-arginine methyl ester) substrate is activated by Ca(2+), Fe(3+), Mg(2+) and Zn(2+), and inhibited by EDTA, PMSF and DTT. Thrombin-like enzyme that shows fibrinogenolytic activity against bovine fibrinogen alpha and beta chains, but not gamma chain. Hydrolyzes fibrin. Enhances ADP-induced human platelet aggregation. Has arginine esterase activity for TAMe (tosyl-arginine methyl ester) substrate. Reduces thrombin-induced thrombosis. Does not have hemorrhagic activity. Reduces the motility of human liver cancer HepG2 cells in a wound-healing assay. This is Thrombin-like enzyme agkihpin-2 from Gloydius halys (Chinese water mocassin).